Reading from the N-terminus, the 138-residue chain is ATP synthase epsilon chain (138 aa).

This sequence belongs to the ATPase epsilon chain family. F-type ATPases have 2 components, CF(1) - the catalytic core - and CF(0) - the membrane proton channel. CF(1) has five subunits: alpha(3), beta(3), gamma(1), delta(1), epsilon(1). CF(0) has three main subunits: a, b and c.

The protein resides in the cell membrane. Its function is as follows. Produces ATP from ADP in the presence of a proton gradient across the membrane. In Streptococcus equi subsp. equi (strain 4047), this protein is ATP synthase epsilon chain.